We begin with the raw amino-acid sequence, 604 residues long: Aspartate--tRNA(Asp/Asn) ligase (604 aa).

An L-aspartate-binding site is contributed by glutamate 174. Positions glutamine 198–lysine 201 are aspartate. Arginine 220 is a binding site for L-aspartate. ATP contacts are provided by residues arginine 220 to glutamate 222 and glutamine 229. Histidine 460 is a binding site for L-aspartate. Glutamate 494 contacts ATP. Arginine 501 serves as a coordination point for L-aspartate. Position 546–549 (glycine 546–arginine 549) interacts with ATP.

It belongs to the class-II aminoacyl-tRNA synthetase family. Type 1 subfamily. As to quaternary structure, homodimer.

The protein localises to the cytoplasm. It carries out the reaction tRNA(Asx) + L-aspartate + ATP = L-aspartyl-tRNA(Asx) + AMP + diphosphate. Aspartyl-tRNA synthetase with relaxed tRNA specificity since it is able to aspartylate not only its cognate tRNA(Asp) but also tRNA(Asn). Reaction proceeds in two steps: L-aspartate is first activated by ATP to form Asp-AMP and then transferred to the acceptor end of tRNA(Asp/Asn). The polypeptide is Aspartate--tRNA(Asp/Asn) ligase (Paracidovorax citrulli (strain AAC00-1) (Acidovorax citrulli)).